We begin with the raw amino-acid sequence, 175 residues long: Large ribosomal subunit protein uL10 (175 aa).

This sequence belongs to the universal ribosomal protein uL10 family. As to quaternary structure, part of the ribosomal stalk of the 50S ribosomal subunit. The N-terminus interacts with L11 and the large rRNA to form the base of the stalk. The C-terminus forms an elongated spine to which L12 dimers bind in a sequential fashion forming a multimeric L10(L12)X complex.

Its function is as follows. Forms part of the ribosomal stalk, playing a central role in the interaction of the ribosome with GTP-bound translation factors. This Halorhodospira halophila (strain DSM 244 / SL1) (Ectothiorhodospira halophila (strain DSM 244 / SL1)) protein is Large ribosomal subunit protein uL10.